We begin with the raw amino-acid sequence, 415 residues long: Histidine--tRNA ligase (415 aa).

This sequence belongs to the class-II aminoacyl-tRNA synthetase family. Homodimer.

Its subcellular location is the cytoplasm. It catalyses the reaction tRNA(His) + L-histidine + ATP = L-histidyl-tRNA(His) + AMP + diphosphate + H(+). This is Histidine--tRNA ligase from Clostridium botulinum (strain Langeland / NCTC 10281 / Type F).